Here is a 91-residue protein sequence, read N- to C-terminus: Small ribosomal subunit protein uS19m (91 aa).

This sequence belongs to the universal ribosomal protein uS19 family. As to quaternary structure, component of the mitochondrial small ribosomal subunit (mt-SSU). Mature yeast 74S mitochondrial ribosomes consist of a small (37S) and a large (54S) subunit. The 37S small subunit contains a 15S ribosomal RNA (15S mt-rRNA) and 34 different proteins. The 54S large subunit contains a 21S rRNA (21S mt-rRNA) and 46 different proteins.

Its subcellular location is the mitochondrion. Component of the mitochondrial ribosome (mitoribosome), a dedicated translation machinery responsible for the synthesis of mitochondrial genome-encoded proteins, including at least some of the essential transmembrane subunits of the mitochondrial respiratory chain. The mitoribosomes are attached to the mitochondrial inner membrane and translation products are cotranslationally integrated into the membrane. The chain is Small ribosomal subunit protein uS19m (RSM19) from Saccharomyces cerevisiae (strain ATCC 204508 / S288c) (Baker's yeast).